Consider the following 169-residue polypeptide: MYTSGYAHRSSSFSSAASKIARVSTENTTAGLISEVVYREDQPMMTQLLLLPLLQQLGQQSRWQLWLTPQQKLSREWVQASGLPLTKVMQISQLSPCHTVESMVRALRTGNYSVVIGWLADDLTAEEHAELVDAANEGNAMGFIMRPVSASSHATRQLSGLKIHSNLYH.

The segment at 106–112 is ftsZ binding; sequence ALRTGNY. The segment at 162–169 is lon protease binding; it reads KIHSNLYH.

Belongs to the SulA family. Interacts with FtsZ. Post-translationally, is rapidly cleaved and degraded by the Lon protease once DNA damage is repaired.

In terms of biological role, component of the SOS system and an inhibitor of cell division. Accumulation of SulA causes rapid cessation of cell division and the appearance of long, non-septate filaments. In the presence of GTP, binds a polymerization-competent form of FtsZ in a 1:1 ratio, thus inhibiting FtsZ polymerization and therefore preventing it from participating in the assembly of the Z ring. This mechanism prevents the premature segregation of damaged DNA to daughter cells during cell division. The protein is Cell division inhibitor SulA of Escherichia coli O81 (strain ED1a).